A 401-amino-acid polypeptide reads, in one-letter code: Shugoshin (401 aa).

Positions 3-49 (SKVEQQYKLLNAELMDQVQKQRLEIGEYRKRVISLEREIMDIREEHV) form a coiled coil. Positions 82-197 (EPAPAAQINR…VEETQTEQNE (116 aa)) are disordered. Residues 98 to 108 (SSREICKDMRR) show a composition bias toward basic and acidic residues. Residues 114–137 (RTTRPISPRRSSSVTSTVSSTSRR) are compositionally biased toward low complexity. Residues serine 124, serine 125, and serine 126 each carry the phosphoserine; by AurB modification. Residues 171–183 (VFDEDDSDDDFDE) show a composition bias toward acidic residues. Threonine 331 is subject to Phosphothreonine; by PLK1. The disordered stretch occupies residues 338–401 (EEMPSIRTRS…GSKGKAKAKK (64 aa)). Residues 348 to 377 (RTAANKKSENTDMSSSFCNNSARPSRSCRP) are compositionally biased toward polar residues. Residues 387–401 (NKLRNGSKGKAKAKK) are compositionally biased toward basic residues.

It belongs to the shugoshin family. In terms of assembly, homodimer. Interacts with Incenp. Phosphorylation by polo-like kinase (PLK) on Thr-331 antagonizes cohesive function. Phosphorylation on Thr-331 at the metaphase anaphase transition leads to its dissociation from centromeres. In contrast, phosphorylation by aurB/ial on either Ser-124, Ser-125 or Ser-126 is required for association with centromeres.

The protein resides in the chromosome. It is found in the centromere. Functionally, plays a central role in chromosome cohesion during meiosis and mitosis by preventing premature dissociation of cohesin complex from centromeres after prophase, when most of cohesin complex dissociates from chromosomes arms. May act by protecting or Rad21 from cleavage by Sse/separase. Required during meiosis in both males and females. The polypeptide is Shugoshin (mei-S332) (Drosophila melanogaster (Fruit fly)).